The chain runs to 208 residues: Ribosomal RNA large subunit methyltransferase E (208 aa).

5 residues coordinate S-adenosyl-L-methionine: Gly-63, Trp-65, Asp-83, Asp-99, and Asp-124. Residue Lys-164 is the Proton acceptor of the active site.

This sequence belongs to the class I-like SAM-binding methyltransferase superfamily. RNA methyltransferase RlmE family.

The protein resides in the cytoplasm. It carries out the reaction uridine(2552) in 23S rRNA + S-adenosyl-L-methionine = 2'-O-methyluridine(2552) in 23S rRNA + S-adenosyl-L-homocysteine + H(+). In terms of biological role, specifically methylates the uridine in position 2552 of 23S rRNA at the 2'-O position of the ribose in the fully assembled 50S ribosomal subunit. This chain is Ribosomal RNA large subunit methyltransferase E, found in Alcanivorax borkumensis (strain ATCC 700651 / DSM 11573 / NCIMB 13689 / SK2).